We begin with the raw amino-acid sequence, 273 residues long: MSDMHSLLIAAILGVVEGLTEFLPVSSTGHMIIVGHLLGFEGDTAKTFEVVIQLGSILAVVVMFWRQLFGLIGIHFGRPLQREGESKGRLTLIHILLGMIPAVVLGLVFHDTIKSLFNPINVMYALVVGGLLLIAAECLKPKEPRAPGLDDMTYRQAFMIGCFQCLALWPGFSRSGATISGGMLMGVSRYAASEFSFLLAVPMMMGATVLDLYKSWSFLTAADIPMFAVGFVTAFVVALIAIKTFLQLIKRISFIPFAIYRFVVAAAVYVVFF.

Transmembrane regions (helical) follow at residues Leu-54–Ile-74, Leu-90–His-110, Leu-116–Ala-136, Gln-156–Thr-178, Tyr-190–Leu-210, Ala-222–Ile-242, and Ile-252–Phe-272.

It belongs to the UppP family.

Its subcellular location is the cell inner membrane. The enzyme catalyses di-trans,octa-cis-undecaprenyl diphosphate + H2O = di-trans,octa-cis-undecaprenyl phosphate + phosphate + H(+). In terms of biological role, catalyzes the dephosphorylation of undecaprenyl diphosphate (UPP). Confers resistance to bacitracin. The protein is Undecaprenyl-diphosphatase of Salmonella paratyphi A (strain ATCC 9150 / SARB42).